The sequence spans 435 residues: GTPase Der (435 aa).

EngA-type G domains lie at 4 to 167 (PIVA…SPDA) and 175 to 350 (ISFS…ENKN). GTP contacts are provided by residues 10 to 17 (GQPNVGKS), 57 to 61 (DTGGI), 119 to 122 (NKAD), 181 to 188 (GRPNVGKS), 228 to 232 (DTAGI), and 293 to 296 (NKWD). A KH-like domain is found at 351-435 (QRIQSSVLND…PIKILPRKRK (85 aa)).

It belongs to the TRAFAC class TrmE-Era-EngA-EngB-Septin-like GTPase superfamily. EngA (Der) GTPase family. As to quaternary structure, associates with the 50S ribosomal subunit.

In terms of biological role, GTPase that plays an essential role in the late steps of ribosome biogenesis. This is GTPase Der from Lactobacillus delbrueckii subsp. bulgaricus (strain ATCC 11842 / DSM 20081 / BCRC 10696 / JCM 1002 / NBRC 13953 / NCIMB 11778 / NCTC 12712 / WDCM 00102 / Lb 14).